The chain runs to 74 residues: Large ribosomal subunit protein bL31 (74 aa).

The Zn(2+) site is built by Cys-16, Cys-18, Cys-38, and Cys-41.

The protein belongs to the bacterial ribosomal protein bL31 family. Type A subfamily. In terms of assembly, part of the 50S ribosomal subunit. Zn(2+) is required as a cofactor.

In terms of biological role, binds the 23S rRNA. The polypeptide is Large ribosomal subunit protein bL31 (Mycobacteroides abscessus (strain ATCC 19977 / DSM 44196 / CCUG 20993 / CIP 104536 / JCM 13569 / NCTC 13031 / TMC 1543 / L948) (Mycobacterium abscessus)).